A 1120-amino-acid polypeptide reads, in one-letter code: Transcription-repair-coupling factor (1120 aa).

Residues 591 to 756 (DLTNGMLMDR…MTGLKELSII (166 aa)) enclose the Helicase ATP-binding domain. 604-611 (GDVGFGKT) provides a ligand contact to ATP. Residues 709–712 (DEEQ) carry the DEEQ box motif. The 157-residue stretch at 777 to 933 (IIRDALLREH…TIASHDADLR (157 aa)) folds into the Helicase C-terminal domain.

This sequence in the N-terminal section; belongs to the UvrB family. The protein in the C-terminal section; belongs to the helicase family. RecG subfamily.

The protein localises to the cytoplasm. Functionally, couples transcription and DNA repair by recognizing RNA polymerase (RNAP) stalled at DNA lesions. Mediates ATP-dependent release of RNAP and its truncated transcript from the DNA, and recruitment of nucleotide excision repair machinery to the damaged site. The protein is Transcription-repair-coupling factor of Rickettsia prowazekii (strain Madrid E).